Reading from the N-terminus, the 190-residue chain is Protein GrpE (190 aa).

Disordered regions lie at residues 1–22 (MAEE…GQTI) and 170–190 (EEGE…KPQS). The segment covering 181-190 (ARVKVGKPQS) has biased composition (basic residues).

It belongs to the GrpE family. In terms of assembly, homodimer.

Its subcellular location is the cytoplasm. Participates actively in the response to hyperosmotic and heat shock by preventing the aggregation of stress-denatured proteins, in association with DnaK and GrpE. It is the nucleotide exchange factor for DnaK and may function as a thermosensor. Unfolded proteins bind initially to DnaJ; upon interaction with the DnaJ-bound protein, DnaK hydrolyzes its bound ATP, resulting in the formation of a stable complex. GrpE releases ADP from DnaK; ATP binding to DnaK triggers the release of the substrate protein, thus completing the reaction cycle. Several rounds of ATP-dependent interactions between DnaJ, DnaK and GrpE are required for fully efficient folding. This chain is Protein GrpE, found in Leptospira biflexa serovar Patoc (strain Patoc 1 / Ames).